Here is a 367-residue protein sequence, read N- to C-terminus: Uptake hydrogenase small subunit (367 aa).

Positions 1-45 (MTPTETFYEVMRRQGVTRRSFLKFCSLTATALGLGPAYTSEIAHA) form a signal peptide, tat-type signal. 8 residues coordinate [4Fe-4S] cluster: C62, C65, C160, C194, H232, C235, C260, and C266. The [3Fe-4S] cluster site is built by C275, C294, and C297.

The protein belongs to the [NiFe]/[NiFeSe] hydrogenase small subunit family. As to quaternary structure, heterodimer of a large and a small subunit. The cofactor is [4Fe-4S] cluster. Requires [3Fe-4S] cluster as cofactor. Predicted to be exported by the Tat system. The position of the signal peptide cleavage has been experimentally proven.

Its subcellular location is the cell membrane. The catalysed reaction is H2 + A = AH2. In terms of biological role, this enzyme recycles the H(2) produced by nitrogenase to increase the production of ATP and to protect nitrogenase against inhibition or damage by O(2) under carbon- or phosphate-limited conditions. In Afipia carboxidovorans (strain ATCC 49405 / DSM 1227 / KCTC 32145 / OM5) (Oligotropha carboxidovorans), this protein is Uptake hydrogenase small subunit (hoxS).